Reading from the N-terminus, the 539-residue chain is Neutral amino acid transporter B(0) (539 aa).

Met-1 bears the N-acetylmethionine mark. Over 1-52 the chain is Cytoplasmic; sequence MVADPPKGDPKGYAAAEPTANGVSMLVPIEDVGSLKGGRCGSGDQVRRCLRA. A helical transmembrane segment spans residues 53-82; sequence NLLVLLTVVAVVAGVALGLGVSGAGGAFAL. Residues 83 to 95 are Extracellular-facing; the sequence is GPARLEAFSFPGE. The helical transmembrane segment at 96-117 threads the bilayer; that stretch reads LLLRLLKMIILPLVVCSLIGGA. Over 118-131 the chain is Cytoplasmic; that stretch reads ASLDPSALGRLGAW. The chain crosses the membrane as a helical span at residues 132–154; sequence ALLFFLVTTLLASALGVGLALAL. Topologically, residues 155–223 are extracellular; the sequence is QPGAAFAAIN…GTLVKVPTGG (69 aa). N-linked (GlcNAc...) asparagine glycans are attached at residues Asn-164 and Asn-213. The chain crosses the membrane as a helical span at residues 224-247; sequence EVEGMNILGLVVFAIIFGVALRKL. Over 248–256 the chain is Cytoplasmic; the sequence is GPEGELLIR. Residues 257–284 form a helical membrane-spanning segment; the sequence is FFNSFNDATMVLVSWIMWYAPVGILFLV. Residues 285-305 lie on the Extracellular side of the membrane; the sequence is AGKIVEMENVGLLFASLGKYI. A helical transmembrane segment spans residues 306 to 327; the sequence is LCCLLGHAIHGLLTLPLIYFLF. Residues 328-332 lie on the Cytoplasmic side of the membrane; sequence ARKNP. Residues 333–363 constitute an intramembrane region (discontinuously helical); it reads YRFLWGIMTPLATAFGTSSSSATLPLMMKCV. Residues 364–372 lie on the Cytoplasmic side of the membrane; it reads EEKNGVARH. The chain crosses the membrane as a helical span at residues 373 to 399; the sequence is ISRFILPIGATVNMDGAALFQCVAAVF. The Na(+) site is built by Gly-381, Thr-383, and Asn-385. The Extracellular portion of the chain corresponds to 400–412; the sequence is IAQLNHRSLDFVK. The segment at residues 413–446 is an intramembrane region (discontinuously helical); the sequence is IITILVTATASSVGAAGIPSGGVLTLAIILEAVN. Residues 447 to 459 lie on the Extracellular side of the membrane; that stretch reads LPVHDISLILAVD. A helical transmembrane segment spans residues 460 to 481; sequence WLVDRSCTVLNVEGDAFGAGLL. Positions 470 and 474 each coordinate Na(+). The Cytoplasmic segment spans residues 482-539; the sequence is QSYLDRTENCNSVPELIQVKSEMPLAALPVPGEEGNPLLKGCPGPAGDADTCEKESVM. 3 positions are modified to phosphoserine: Ser-493, Ser-502, and Ser-537. A disordered region spans residues 518 to 539; it reads PLLKGCPGPAGDADTCEKESVM.

The protein belongs to the dicarboxylate/amino acid:cation symporter (DAACS) (TC 2.A.23) family. SLC1A5 subfamily. Homotrimer.

It is found in the cell membrane. Its subcellular location is the melanosome. It catalyses the reaction L-glutamine(out) + L-serine(in) + Na(+)(out) = L-glutamine(in) + L-serine(out) + Na(+)(in). It carries out the reaction L-glutamine(in) + L-serine(out) + Na(+)(out) = L-glutamine(out) + L-serine(in) + Na(+)(in). The catalysed reaction is L-threonine(in) + L-glutamine(out) + Na(+)(out) = L-threonine(out) + L-glutamine(in) + Na(+)(in). The enzyme catalyses L-threonine(out) + L-glutamine(in) + Na(+)(out) = L-threonine(in) + L-glutamine(out) + Na(+)(in). It catalyses the reaction L-asparagine(in) + L-glutamine(out) + Na(+)(out) = L-asparagine(out) + L-glutamine(in) + Na(+)(in). It carries out the reaction L-asparagine(out) + L-glutamine(in) + Na(+)(out) = L-asparagine(in) + L-glutamine(out) + Na(+)(in). The catalysed reaction is L-glutamine(in) + L-alanine(out) + Na(+)(out) = L-glutamine(out) + L-alanine(in) + Na(+)(in). The enzyme catalyses L-valine(out) + L-glutamine(in) + Na(+)(out) = L-valine(in) + L-glutamine(out) + Na(+)(in). It catalyses the reaction L-glutamine(in) + L-methionine(out) + Na(+)(out) = L-glutamine(out) + L-methionine(in) + Na(+)(in). It carries out the reaction L-glutamine(in) + L-glutamate(out) + Na(+)(out) + H(+)(out) = L-glutamine(out) + L-glutamate(in) + Na(+)(in) + H(+)(in). The catalysed reaction is D-serine(in) + L-glutamine(out) + Na(+)(out) = D-serine(out) + L-glutamine(in) + Na(+)(in). The enzyme catalyses D-serine(in) + L-alanine(out) + Na(+)(out) = D-serine(out) + L-alanine(in) + Na(+)(in). It catalyses the reaction nitrate(in) = nitrate(out). It carries out the reaction iodide(out) = iodide(in). The catalysed reaction is thiocyanate(in) = thiocyanate(out). Sodium-coupled antiporter of neutral amino acids. In a tri-substrate transport cycle, exchanges neutral amino acids between the extracellular and intracellular compartments, coupled to the inward cotransport of at least one sodium ion. The preferred substrate is the essential amino acid L-glutamine, a precursor for biosynthesis of proteins, nucleotides and amine sugars as well as an alternative fuel for mitochondrial oxidative phosphorylation. Exchanges L-glutamine with other neutral amino acids such as L-serine, L-threonine and L-asparagine in a bidirectional way. Provides L-glutamine to proliferating stem and activated cells driving the metabolic switch toward cell differentiation. The transport cycle is usually pH-independent, with the exception of L-glutamate. Transports extracellular L-glutamate coupled to the cotransport of one proton and one sodium ion in exchange for intracellular L-glutamine counter-ion. May provide for L-glutamate uptake in glial cells regulating glutamine/glutamate cycle in the nervous system. Can transport D-amino acids. Mediates D-serine release from the retinal glia potentially affecting NMDA receptor function in retinal neurons. Displays sodium- and amino acid-dependent but uncoupled channel-like anion conductance with a preference SCN(-) &gt;&gt; NO3(-) &gt; I(-) &gt; Cl(-). Through binding of the fusogenic protein syncytin-1/ERVW-1 may mediate trophoblasts syncytialization, the spontaneous fusion of their plasma membranes, an essential process in placental development. The protein is Neutral amino acid transporter B(0) (SLC1A5) of Bos taurus (Bovine).